We begin with the raw amino-acid sequence, 202 residues long: Orotate phosphoribosyltransferase (202 aa).

5-phospho-alpha-D-ribose 1-diphosphate contacts are provided by residues Lys-93 and 113–121 (EDIITTGGS). Orotate contacts are provided by Thr-117 and Arg-145.

It belongs to the purine/pyrimidine phosphoribosyltransferase family. PyrE subfamily. In terms of assembly, homodimer. Mg(2+) is required as a cofactor.

It catalyses the reaction orotidine 5'-phosphate + diphosphate = orotate + 5-phospho-alpha-D-ribose 1-diphosphate. It functions in the pathway pyrimidine metabolism; UMP biosynthesis via de novo pathway; UMP from orotate: step 1/2. Its function is as follows. Catalyzes the transfer of a ribosyl phosphate group from 5-phosphoribose 1-diphosphate to orotate, leading to the formation of orotidine monophosphate (OMP). This chain is Orotate phosphoribosyltransferase, found in Campylobacter jejuni subsp. jejuni serotype O:2 (strain ATCC 700819 / NCTC 11168).